A 142-amino-acid chain; its full sequence is Transcriptional regulator MraZ (142 aa).

SpoVT-AbrB domains follow at residues Thr-5–Glu-46 and Ala-75–Ala-118.

The protein belongs to the MraZ family. In terms of assembly, forms oligomers.

It is found in the cytoplasm. The protein resides in the nucleoid. This Tropheryma whipplei (strain TW08/27) (Whipple's bacillus) protein is Transcriptional regulator MraZ.